Reading from the N-terminus, the 325-residue chain is MGSASPGLSNVSPGCLLLFPDVAPRTGTEKAASGAMGPEKQEWSPSPPATPEQGLSAFYLSYFNMYPDDSSWVAKVPEARAGEDHPEEPEQCPVIDSQASGSTLDEHSLEQVQSMVVGEVLKDIETACKLLNITADPGDWSPGNVQKWLLWTEHQYRLPPAGKAFQELGGKELCAMSEEQFRQRAPLGGDVLHAHLDIWKSAAWMKERTSPGTLHYCASTSEEGWTDGEVDSSCSGQPIHLWQFLKELLLKPHSYGRFIRWLNKEKGIFKIEDSAQVARLWGVRKNRPAMNYDKLSRSIRQYYKKGIIRKPDISQRLVYQFVHPV.

2 disordered regions span residues 27–50 (GTEKAASGAMGPEKQEWSPSPPAT) and 79–100 (ARAGEDHPEEPEQCPVIDSQAS). One can recognise a PNT domain in the interval 119 to 203 (EVLKDIETAC…AHLDIWKSAA (85 aa)). Positions 239–322 (IHLWQFLKEL…ISQRLVYQFV (84 aa)) form a DNA-binding region, ETS.

The protein belongs to the ETS family. As to quaternary structure, interacts with the DNA-binding domain of the androgen receptor. Interacts with NKX3-1. Expressed in the accessory glands of sex organs including the prostate, seminal vesicle, coagulating gland in males, the oviduct in females, and in intestines. Expression is epithelial-specific.

It is found in the nucleus. Its function is as follows. May function as an androgen-independent transactivator of the prostate-specific antigen (PSA) promoter. Binds to 5'-GGAT-3' DNA sequences. May play a role in the regulation of the prostate gland and/or prostate cancer development. Acts as a transcriptional activator for SERPINB5 promoter. The chain is SAM pointed domain-containing Ets transcription factor (Spdef) from Mus musculus (Mouse).